The primary structure comprises 144 residues: Large ribosomal subunit protein uL15 (144 aa).

Residues 1–57 (MFLNTLRPGEGSKHAPKRVGRGIGSGLGKTGGRGHKGLKSRSGGSVKPGFEGGQMPL) form a disordered region. A compositionally biased stretch (gly residues) spans 21 to 31 (RGIGSGLGKTG).

This sequence belongs to the universal ribosomal protein uL15 family. In terms of assembly, part of the 50S ribosomal subunit.

In terms of biological role, binds to the 23S rRNA. The polypeptide is Large ribosomal subunit protein uL15 (Marinomonas sp. (strain MWYL1)).